Here is a 700-residue protein sequence, read N- to C-terminus: Autophagy-related protein 13 (700 aa).

The tract at residues 319 to 352 (GSINSSSSPPPGATQSNQSVSSFSTSKPIPVTLN) is disordered. The segment covering 332-344 (TQSNQSVSSFSTS) has biased composition (low complexity). Positions 399-407 (SSFGSRFRT) are ATG17-binding. Positions 428-487 (TPNNPILHNFRSRNKSPSVSSTELGPSSSIYMDDDLDSFMKMLDSKPDLRFPSNSPSVYE) are ATG1-binding. Positions 506–532 (EQQQHGSPSSNQIMIHSQSQTSQSQVF) are enriched in polar residues. Disordered regions lie at residues 506–562 (EQQQ…PGVS), 576–637 (HASS…NPEL), and 649–700 (ESDD…NQEF). A compositionally biased stretch (low complexity) spans 595–631 (SSPPASATAVATVHNSLRRLTSSSQRTNTNSTNSSTR). The segment covering 656-667 (DEHSPRSTDTKS) has biased composition (basic and acidic residues).

Belongs to the ATG13 family. Fungi subfamily. Hypophosphorylated form interacts with ATG1 to form the ATG1-ATG13 kinase complex. The ATG1-ATG13 complex interacts with the ATG17-ATG29-ATG31 complex through direct interaction with ATG17. Interacts with VAC8.

It localises to the cytoplasm. It is found in the preautophagosomal structure. In terms of biological role, activates the ATG1 kinase in a nutritional condition dependent manner through the TOR pathway, leading to autophagy. Involved in ATG9 and ATG23 cycling through the pre-autophagosomal structure. Also involved in cytoplasm to vacuole transport (Cvt) and more specifically in Cvt vesicle formation. Seems to play a role in the switching machinery regulating the conversion between the Cvt pathway and autophagy. Finally, ATG13 is also required for glycogen storage during stationary phase. Functionally, acts as a negative regulator of xylose alcoholic fermentation, a role that is not related to autophagy. This is Autophagy-related protein 13 from Ogataea parapolymorpha (strain ATCC 26012 / BCRC 20466 / JCM 22074 / NRRL Y-7560 / DL-1) (Yeast).